The sequence spans 589 residues: Transmembrane 9 superfamily member 1 (589 aa).

Residues 1–24 (MPSSSSAAVLVFLLLVSLLTPTFA) form the signal peptide. The Lumenal portion of the chain corresponds to 25–222 (SDSDHKYQAE…YPFFEHQIHW (198 aa)). Residues 223–243 (FSIFNSFMMVIFLTGLVSMIL) traverse the membrane as a helical segment. The Cytoplasmic portion of the chain corresponds to 244-293 (MRTLRNDYAKYAREDDDLESLERDVSEESGWKLVHGDVFRPASSLVLLSA). The chain crosses the membrane as a helical span at residues 294–314 (VVGTGAQLALLVLLVILMAIV). Residues 315-321 (GTLYVGR) are Lumenal-facing. Residues 322–342 (GAIVTTFIVCYALTSFVSGYV) form a helical membrane-spanning segment. Residues 343-364 (SGGMYSRSGGKHWIKCMVLTAS) lie on the Cytoplasmic side of the membrane. A helical membrane pass occupies residues 365–385 (LFPFLCFGIGFLLNTIAIFYG). The Lumenal segment spans residues 386–395 (SLAAIPFGTM). The helical transmembrane segment at 396 to 416 (VVVFVIWGFISFPLALLGTVV) threads the bilayer. Topologically, residues 417–448 (GRNWSGAPNNPCRVKTIPRPIPEKKWYLTPSV) are cytoplasmic. Residues 449–469 (VSLMGGLLPFGSIFIEMYFVF) form a helical membrane-spanning segment. Over 470-481 (TSFWNYKVYYVY) the chain is Lumenal. A helical transmembrane segment spans residues 482-502 (GFMLLVFVILVIVTVCVTIVG). The Cytoplasmic segment spans residues 503–518 (TYFLLNAENYHWQWTS). Residues 519-539 (FFSAASTAVYVYLYSIYYYYV) form a helical membrane-spanning segment. Residues 540-550 (KTKMSGFFQTS) are Lumenal-facing. A helical membrane pass occupies residues 551-571 (FYFGYTMMFCLGLGILCGAVG). The Cytoplasmic segment spans residues 572 to 589 (YLGSNLFVRRIYRNIKCD). Positions 578-583 (FVRRIY) match the Endoplasmic reticulum export signal motif. Positions 587 to 589 (KCD) match the Golgi retention signal motif.

The protein belongs to the nonaspanin (TM9SF) (TC 9.A.2) family. Ubiquitous.

The protein resides in the endosome membrane. It is found in the golgi apparatus membrane. This is Transmembrane 9 superfamily member 1 from Arabidopsis thaliana (Mouse-ear cress).